A 365-amino-acid polypeptide reads, in one-letter code: Phospho-N-acetylmuramoyl-pentapeptide-transferase (365 aa).

Helical transmembrane passes span 15–35 (WPAA…DRLI), 39–59 (LLSL…WWGV), 84–104 (GTPT…GGLV), 114–134 (LLAI…DDWS), 156–176 (AAVL…TVSL), 178–198 (FNLD…VFLA), 209–229 (LDGL…LQLM), 235–255 (GDPA…GFLI), 263–283 (VFMG…VALL), 291–311 (LLMG…VWVF), and 343–363 (VVVP…LGLH).

Belongs to the glycosyltransferase 4 family. MraY subfamily. The cofactor is Mg(2+).

The protein resides in the cell inner membrane. It catalyses the reaction UDP-N-acetyl-alpha-D-muramoyl-L-alanyl-gamma-D-glutamyl-meso-2,6-diaminopimeloyl-D-alanyl-D-alanine + di-trans,octa-cis-undecaprenyl phosphate = di-trans,octa-cis-undecaprenyl diphospho-N-acetyl-alpha-D-muramoyl-L-alanyl-D-glutamyl-meso-2,6-diaminopimeloyl-D-alanyl-D-alanine + UMP. It functions in the pathway cell wall biogenesis; peptidoglycan biosynthesis. Catalyzes the initial step of the lipid cycle reactions in the biosynthesis of the cell wall peptidoglycan: transfers peptidoglycan precursor phospho-MurNAc-pentapeptide from UDP-MurNAc-pentapeptide onto the lipid carrier undecaprenyl phosphate, yielding undecaprenyl-pyrophosphoryl-MurNAc-pentapeptide, known as lipid I. In Synechococcus sp. (strain WH7803), this protein is Phospho-N-acetylmuramoyl-pentapeptide-transferase.